A 175-amino-acid chain; its full sequence is MGLSLEQKKAMVQEVAAVAQEALTAVSAEYRGLTAGEMDQLRAQAREQGVYLRVVKNTLARRAVAGTEFECMTEGFYGPLLLAFSQDDPGAAARLVRDFRKKNESLVVRNVAFGGTLYGPEHLDRLASLPTRDEALSKLMATMRAPVQKLATTTNEVPGKLVRTLAAVRDAKEAA.

This sequence belongs to the universal ribosomal protein uL10 family. Part of the ribosomal stalk of the 50S ribosomal subunit. The N-terminus interacts with L11 and the large rRNA to form the base of the stalk. The C-terminus forms an elongated spine to which L12 dimers bind in a sequential fashion forming a multimeric L10(L12)X complex.

Functionally, forms part of the ribosomal stalk, playing a central role in the interaction of the ribosome with GTP-bound translation factors. In Halorhodospira halophila (strain DSM 244 / SL1) (Ectothiorhodospira halophila (strain DSM 244 / SL1)), this protein is Large ribosomal subunit protein uL10.